The following is an 84-amino-acid chain: Cell division topological specificity factor (84 aa).

The protein belongs to the MinE family.

Prevents the cell division inhibition by proteins MinC and MinD at internal division sites while permitting inhibition at polar sites. This ensures cell division at the proper site by restricting the formation of a division septum at the midpoint of the long axis of the cell. The chain is Cell division topological specificity factor from Desulfotalea psychrophila (strain LSv54 / DSM 12343).